The following is a 666-amino-acid chain: ATP synthase subunit alpha 2 (666 aa).

182–189 (GDRATGKT) serves as a coordination point for ATP. Residues 527 to 666 (MPAEDAAGDI…DAEAEARHKR (140 aa)) form a disordered region. Over residues 545–590 (ARGDADRDADHGANREVSREVSPEASREVSREVSCEVSHEADRDAA) the composition is skewed to basic and acidic residues. The span at 591-601 (ADAARVAGRAP) shows a compositional bias: low complexity. Residues 623–641 (ADGDRASASRPRPDARGDA) show a composition bias toward basic and acidic residues.

This sequence belongs to the ATPase alpha/beta chains family. F-type ATPases have 2 components, CF(1) - the catalytic core - and CF(0) - the membrane proton channel. CF(1) has five subunits: alpha(3), beta(3), gamma(1), delta(1), epsilon(1). CF(0) has three main subunits: a(1), b(2) and c(9-12). The alpha and beta chains form an alternating ring which encloses part of the gamma chain. CF(1) is attached to CF(0) by a central stalk formed by the gamma and epsilon chains, while a peripheral stalk is formed by the delta and b chains.

It localises to the cell inner membrane. It carries out the reaction ATP + H2O + 4 H(+)(in) = ADP + phosphate + 5 H(+)(out). Its function is as follows. Produces ATP from ADP in the presence of a proton gradient across the membrane. The alpha chain is a regulatory subunit. This Burkholderia pseudomallei (strain K96243) protein is ATP synthase subunit alpha 2.